Consider the following 238-residue polypeptide: Purine nucleoside phosphorylase DeoD-type (238 aa).

His-4 contributes to the a purine D-ribonucleoside binding site. Phosphate-binding positions include Gly-20, Arg-24, Arg-43, and 87–90; that span reads RIGS. A purine D-ribonucleoside is bound by residues 181 to 183 and 205 to 206; these read EME and SD. Residue Asp-206 is the Proton donor of the active site.

This sequence belongs to the PNP/UDP phosphorylase family. In terms of assembly, homohexamer; trimer of homodimers.

The enzyme catalyses a purine D-ribonucleoside + phosphate = a purine nucleobase + alpha-D-ribose 1-phosphate. It carries out the reaction a purine 2'-deoxy-D-ribonucleoside + phosphate = a purine nucleobase + 2-deoxy-alpha-D-ribose 1-phosphate. Its function is as follows. Catalyzes the reversible phosphorolytic breakdown of the N-glycosidic bond in the beta-(deoxy)ribonucleoside molecules, with the formation of the corresponding free purine bases and pentose-1-phosphate. In Mycoplasma genitalium (strain ATCC 33530 / DSM 19775 / NCTC 10195 / G37) (Mycoplasmoides genitalium), this protein is Purine nucleoside phosphorylase DeoD-type.